The chain runs to 542 residues: Esterase 6 (542 aa).

The N-terminal stretch at 1–19 (MNYVGLIIVLSCLWLGSNA) is a signal peptide. N40 is a glycosylation site (N-linked (GlcNAc...) asparagine). Residues C84 and C103 are joined by a disulfide bond. S207 serves as the catalytic Acyl-ester intermediate. Cysteines 259 and 271 form a disulfide. N418 and N454 each carry an N-linked (GlcNAc...) asparagine glycan. H464 acts as the Charge relay system in catalysis. The cysteines at positions 512 and 533 are disulfide-linked.

Belongs to the type-B carboxylesterase/lipase family. As to quaternary structure, monomer.

The protein localises to the secreted. It carries out the reaction a carboxylic ester + H2O = an alcohol + a carboxylate + H(+). Its function is as follows. Transferred from the ejaculatory bulbs of males to the female genitals upon copulation, plays an important role in the reproductive biology. This Drosophila simulans (Fruit fly) protein is Esterase 6 (Est-6).